We begin with the raw amino-acid sequence, 398 residues long: Phosphoglycerate kinase (398 aa).

Substrate-binding positions include 21–23, R36, 59–62, R119, and R157; these read DFN and HLGR. ATP-binding positions include K208, G296, E327, and 354-357; that span reads GGDS.

It belongs to the phosphoglycerate kinase family. In terms of assembly, monomer.

Its subcellular location is the cytoplasm. The catalysed reaction is (2R)-3-phosphoglycerate + ATP = (2R)-3-phospho-glyceroyl phosphate + ADP. It participates in carbohydrate degradation; glycolysis; pyruvate from D-glyceraldehyde 3-phosphate: step 2/5. The chain is Phosphoglycerate kinase from Streptococcus equi subsp. zooepidemicus (strain MGCS10565).